The chain runs to 175 residues: Hypoxanthine-guanine phosphoribosyltransferase (175 aa).

2 residues coordinate diphosphate: Lys40 and Gly41. Residues Glu96 and Asp97 each contribute to the Mg(2+) site. The active-site Proton acceptor is the Asp100. GMP contacts are provided by residues Lys128, 149 to 150, and Asp156; that span reads FL. Arg162 lines the diphosphate pocket.

This sequence belongs to the purine/pyrimidine phosphoribosyltransferase family. It depends on Mg(2+) as a cofactor.

It localises to the cytoplasm. The enzyme catalyses IMP + diphosphate = hypoxanthine + 5-phospho-alpha-D-ribose 1-diphosphate. The catalysed reaction is GMP + diphosphate = guanine + 5-phospho-alpha-D-ribose 1-diphosphate. It functions in the pathway purine metabolism; IMP biosynthesis via salvage pathway; IMP from hypoxanthine: step 1/1. Its pathway is purine metabolism; GMP biosynthesis via salvage pathway; GMP from guanine: step 1/1. Its function is as follows. Purine salvage pathway enzyme that catalyzes the transfer of the ribosyl-5-phosphate group from 5-phospho-alpha-D-ribose 1-diphosphate (PRPP) to the N9 position of the 6-oxopurines hypoxanthine and guanine to form the corresponding ribonucleotides IMP (inosine 5'-monophosphate) and GMP (guanosine 5'-monophosphate), with the release of PPi. This Mycoplasma genitalium (strain ATCC 33530 / DSM 19775 / NCTC 10195 / G37) (Mycoplasmoides genitalium) protein is Hypoxanthine-guanine phosphoribosyltransferase (hpt).